Consider the following 216-residue polypeptide: Homologous-pairing protein 2 (216 aa).

The protein belongs to the HOP2 family. Interacts with mcp7.

The protein localises to the nucleus. In terms of biological role, required for proper homologous pairing and efficient cross-over and intragenic recombination during meiosis. Acts indirectly in a process facilitating homologous recombination. Acts during mid- to late-horse-tail period. The protein is Homologous-pairing protein 2 (meu13) of Schizosaccharomyces pombe (strain 972 / ATCC 24843) (Fission yeast).